A 364-amino-acid chain; its full sequence is tRNA 2-selenouridine synthase (364 aa).

In terms of domain architecture, Rhodanese spans 14 to 137 (LLADTPLIDV…LRQTAIQATW (124 aa)). Residue cysteine 97 is the S-selanylcysteine intermediate of the active site.

It belongs to the SelU family. As to quaternary structure, monomer.

The catalysed reaction is 5-methylaminomethyl-2-thiouridine(34) in tRNA + selenophosphate + (2E)-geranyl diphosphate + H2O + H(+) = 5-methylaminomethyl-2-selenouridine(34) in tRNA + (2E)-thiogeraniol + phosphate + diphosphate. The enzyme catalyses 5-methylaminomethyl-2-thiouridine(34) in tRNA + (2E)-geranyl diphosphate = 5-methylaminomethyl-S-(2E)-geranyl-thiouridine(34) in tRNA + diphosphate. It carries out the reaction 5-methylaminomethyl-S-(2E)-geranyl-thiouridine(34) in tRNA + selenophosphate + H(+) = 5-methylaminomethyl-2-(Se-phospho)selenouridine(34) in tRNA + (2E)-thiogeraniol. It catalyses the reaction 5-methylaminomethyl-2-(Se-phospho)selenouridine(34) in tRNA + H2O = 5-methylaminomethyl-2-selenouridine(34) in tRNA + phosphate. Functionally, involved in the post-transcriptional modification of the uridine at the wobble position (U34) of tRNA(Lys), tRNA(Glu) and tRNA(Gln). Catalyzes the conversion of 2-thiouridine (S2U-RNA) to 2-selenouridine (Se2U-RNA). Acts in a two-step process involving geranylation of 2-thiouridine (S2U) to S-geranyl-2-thiouridine (geS2U) and subsequent selenation of the latter derivative to 2-selenouridine (Se2U) in the tRNA chain. The chain is tRNA 2-selenouridine synthase from Salmonella paratyphi A (strain ATCC 9150 / SARB42).